Reading from the N-terminus, the 147-residue chain is Large ribosomal subunit protein uL15 (147 aa).

The disordered stretch occupies residues methionine 1–glutamine 54. Gly residues-rich tracts occupy residues glycine 22–glycine 31 and alanine 42–glycine 52.

Belongs to the universal ribosomal protein uL15 family. Part of the 50S ribosomal subunit.

Binds to the 23S rRNA. The sequence is that of Large ribosomal subunit protein uL15 from Ruminiclostridium cellulolyticum (strain ATCC 35319 / DSM 5812 / JCM 6584 / H10) (Clostridium cellulolyticum).